The chain runs to 486 residues: MVATPSTSAPTKGVVRQVIGPVLDVEFPAGKLPKILNALRIESKNPAGQDIALTAEVQQLLGDHRVRAVAMSGTDGLVRGMEATDTGAPISVPVGEATLGRIFNVLGEPVDEQGPVKTSDTAPIHRSAPKLTDLETKPKVFETGIKVIDLLAPYRQGGKVGLFGGAGVGKTVLIQELINNIAKEHGGVSVFGGVGERTREGNDLYEEFKESGVINAEDLSQSKVALCFGQMNEPPGARMRVGLSALTMAEHFRDVNKQDVLLFVDNIFRFVQAGSEVSALLGRMPSAVGYQPTLGTDVGALQERITSTLEGSITSIQAVYVPADDLTDPAPATTFAHLDATTVLARGLAAKGIYPAVDPLDSTSTMLQPSVVGDDHYKTARAVQSTLQRYKELQDIIAILGLDELSEEDRLTVSRARKIEKFLSQPFFVAEIFTGMSGKYVKLEDTIAGFNMILAGELDDLPEQAFYLVGNIEEVKAKADKINSEK.

G164 to T171 contributes to the ATP binding site.

It belongs to the ATPase alpha/beta chains family. As to quaternary structure, F-type ATPases have 2 components, CF(1) - the catalytic core - and CF(0) - the membrane proton channel. CF(1) has five subunits: alpha(3), beta(3), gamma(1), delta(1), epsilon(1). CF(0) has four main subunits: a(1), b(1), b'(1) and c(9-12).

It is found in the cellular thylakoid membrane. The catalysed reaction is ATP + H2O + 4 H(+)(in) = ADP + phosphate + 5 H(+)(out). In terms of biological role, produces ATP from ADP in the presence of a proton gradient across the membrane. The catalytic sites are hosted primarily by the beta subunits. The sequence is that of ATP synthase subunit beta from Prochlorococcus marinus (strain MIT 9515).